The chain runs to 371 residues: Transcription factor bHLH77 (371 aa).

Disordered regions lie at residues 1-25 (MNMD…FGNG), 65-206 (SGGI…SLAE), and 352-371 (QSNN…KLEP). The segment covering 85–96 (SQPTTQESNKSS) has biased composition (polar residues). The span at 128 to 142 (SPASSSLTASNSKVS) shows a compositional bias: low complexity. The segment covering 165–190 (GVEKCDSKGDNKDDAKPPEAPKDYIH) has biased composition (basic and acidic residues). In terms of domain architecture, bHLH spans 197–247 (QATDSHSLAERARREKISERMTLLQDLVPGCNRITGKAVMLDEIINYVQSL).

Homodimer. Interacts with IBH1. Expressed constitutively in roots, leaves, stems, and flowers.

Its subcellular location is the nucleus. This Arabidopsis thaliana (Mouse-ear cress) protein is Transcription factor bHLH77 (BHLH77).